Reading from the N-terminus, the 492-residue chain is Myocyte-specific enhancer factor 2A (492 aa).

Positions 3–57 (RKKIQITRIMDERNRQVTFTKRKFGLMKKAYELSVLCDCEIALIIFNSSNKLFQY) constitute an MADS-box domain. The mef2-type DNA-binding region spans 58–86 (ASTDMDKVLLKYTEYNEPHESRTNSDIVE). At Ser59 the chain carries Phosphoserine; by CK2. Ser98 is subject to Phosphoserine. The interval 183 to 227 (PQATLHRNVSPGAPQRPPSTGSAGGMLSTSDLTVPNGAGSSPVGN) is disordered. The segment covering 209–227 (LSTSDLTVPNGAGSSPVGN) has biased composition (polar residues). Ser235 is modified (phosphoserine). A disordered region spans residues 242–270 (TGANSLGKVMPTKSPPPPGGGSLGMNSRK). The residue at position 249 (Lys249) is an N6-acetyllysine. Residue Ser255 is modified to Phosphoserine. Residues 266-283 (MNSRKPDLRVVIPPSSKG) form a required for interaction with MAPKs region. 2 positions are modified to phosphothreonine; by MAPK7 and MAPK14: Thr304 and Thr311. At Ser347 the chain carries Phosphoserine; by MAPK7. Polar residues predominate over residues 382–394 (SNLSINTNQNINI). The segment at 382 to 492 (SNLSINTNQN…KRMRMDAWVT (111 aa)) is disordered. Lys395 carries the N6-acetyllysine; alternate modification. Residue Lys395 forms a Glycyl lysine isopeptide (Lys-Gly) (interchain with G-Cter in SUMO); alternate linkage. Ser400 carries the phosphoserine; by CDK5 modification. Thr407 bears the Phosphothreonine mark. Residues 417–430 (PQPPPPPPQAPQPQ) are compositionally biased toward pro residues. Ser438 carries the post-translational modification Phosphoserine; by MAPK. Over residues 438-451 (SPVDSLSSSSSSYD) the composition is skewed to low complexity. Basic and acidic residues-rich tracts occupy residues 452–462 (GSDREDPRGDF) and 473–492 (NSED…AWVT).

As to quaternary structure, binds DNA as a homo- or heterodimer. Dimerizes with MEF2D. Interacts with HDAC7. Interacts with PIAS1; the interaction enhances sumoylation. Interacts with HDAC4, HDAC9 and SLC2A4RG. Interacts (via the N-terminal) with MAPK7; the interaction results in the phosphorylation and transcriptional activity of MEF2A. Constitutive phosphorylation on Ser-400 promotes Lys-395 sumoylation thus preventing acetylation at this site. Dephosphorylation on Ser-400 by PPP3CA upon neuron depolarization promotes a switch from sumoylation to acetylation on residue Lys-395 leading to inhibition of dendrite claw differentiation. Phosphorylation on Thr-304 and Thr-311 are the main sites involved in p38 MAPK signaling and activate transcription. Phosphorylated on these sites by MAPK14/p38alpha and MAPK11/p38beta, but not by MAPK13/p38delta nor by MAPK12/p38gamma. Phosphorylation on Ser-400 by CDK5 induced by neurotoxicity inhibits MEF2A transcriptional activation leading to apoptosis of cortical neurons. Phosphorylation on Thr-304, Thr-311 and Ser-347 can be induced by EGF. In terms of processing, sumoylation on Lys-395 is enhanced by PIAS1 and represses transcriptional activity. Phosphorylation on Ser-400 is required for sumoylation. Has no effect on nuclear location nor on DNA binding. Sumoylated with SUMO1 and, to a lesser extent with SUMO2 and SUMO3. PIASx facilitates sumoylation in postsynaptic dendrites in the cerebellar cortex and promotes their morphogenesis. Post-translationally, acetylation on Lys-395 activates transcriptional activity. Acetylated by p300 on several sites in diffentiating myocytes. Acetylation on Lys-4 increases DNA binding and transactivation. Hyperacetylation by p300 leads to enhanced cardiac myocyte growth and heart failure. Proteolytically cleaved in cerebellar granule neurons on several sites by caspase 3 and caspase 7 following neurotoxicity. Preferentially cleaves the CDK5-mediated hyperphosphorylated form which leads to neuron apoptosis and transcriptional inactivation.

The protein localises to the nucleus. Functionally, transcriptional activator which binds specifically to the MEF2 element, 5'-YTA[AT](4)TAR-3', found in numerous muscle-specific genes. Also involved in the activation of numerous growth factor- and stress-induced genes. Mediates cellular functions not only in skeletal and cardiac muscle development, but also in neuronal differentiation and survival. Plays diverse roles in the control of cell growth, survival and apoptosis via p38 MAPK signaling in muscle-specific and/or growth factor-related transcription. In cerebellar granule neurons, phosphorylated and sumoylated MEF2A represses transcription of NUR77 promoting synaptic differentiation. Associates with chromatin to the ZNF16 promoter. In Bos taurus (Bovine), this protein is Myocyte-specific enhancer factor 2A (MEF2A).